The chain runs to 168 residues: 2-C-methyl-D-erythritol 2,4-cyclodiphosphate synthase (168 aa).

Positions 13 and 15 each coordinate a divalent metal cation. 4-CDP-2-C-methyl-D-erythritol 2-phosphate is bound by residues 13–15 (DVH) and 39–40 (HS). His47 contacts a divalent metal cation. Residues 61–63 (DIG), 66–70 (FPDTD), Phe144, and Lys147 contribute to the 4-CDP-2-C-methyl-D-erythritol 2-phosphate site.

This sequence belongs to the IspF family. As to quaternary structure, homotrimer. A divalent metal cation is required as a cofactor.

It carries out the reaction 4-CDP-2-C-methyl-D-erythritol 2-phosphate = 2-C-methyl-D-erythritol 2,4-cyclic diphosphate + CMP. It functions in the pathway isoprenoid biosynthesis; isopentenyl diphosphate biosynthesis via DXP pathway; isopentenyl diphosphate from 1-deoxy-D-xylulose 5-phosphate: step 4/6. In terms of biological role, involved in the biosynthesis of isopentenyl diphosphate (IPP) and dimethylallyl diphosphate (DMAPP), two major building blocks of isoprenoid compounds. Catalyzes the conversion of 4-diphosphocytidyl-2-C-methyl-D-erythritol 2-phosphate (CDP-ME2P) to 2-C-methyl-D-erythritol 2,4-cyclodiphosphate (ME-CPP) with a corresponding release of cytidine 5-monophosphate (CMP). The sequence is that of 2-C-methyl-D-erythritol 2,4-cyclodiphosphate synthase from Cupriavidus metallidurans (strain ATCC 43123 / DSM 2839 / NBRC 102507 / CH34) (Ralstonia metallidurans).